The sequence spans 515 residues: Maturase K (515 aa).

This sequence belongs to the intron maturase 2 family. MatK subfamily.

Its subcellular location is the plastid. It localises to the chloroplast. Its function is as follows. Usually encoded in the trnK tRNA gene intron. Probably assists in splicing its own and other chloroplast group II introns. This Pinus attenuata (Knobcone pine) protein is Maturase K.